Consider the following 598-residue polypeptide: Elongation factor 4 (598 aa).

Positions 2–183 (KKIRNFCIIA…AIIEKIPPPK (182 aa)) constitute a tr-type G domain. Residues 14 to 19 (DHGKST) and 130 to 133 (NKVD) contribute to the GTP site.

Belongs to the TRAFAC class translation factor GTPase superfamily. Classic translation factor GTPase family. LepA subfamily.

Its subcellular location is the cell inner membrane. It carries out the reaction GTP + H2O = GDP + phosphate + H(+). Its function is as follows. Required for accurate and efficient protein synthesis under certain stress conditions. May act as a fidelity factor of the translation reaction, by catalyzing a one-codon backward translocation of tRNAs on improperly translocated ribosomes. Back-translocation proceeds from a post-translocation (POST) complex to a pre-translocation (PRE) complex, thus giving elongation factor G a second chance to translocate the tRNAs correctly. Binds to ribosomes in a GTP-dependent manner. The protein is Elongation factor 4 of Flavobacterium johnsoniae (strain ATCC 17061 / DSM 2064 / JCM 8514 / BCRC 14874 / CCUG 350202 / NBRC 14942 / NCIMB 11054 / UW101) (Cytophaga johnsonae).